Consider the following 264-residue polypeptide: S-adenosylmethionine decarboxylase proenzyme (264 aa).

Catalysis depends on serine 112, which acts as the Schiff-base intermediate with substrate; via pyruvic acid. Position 112 is a pyruvic acid (Ser); by autocatalysis (serine 112). Histidine 117 functions as the Proton acceptor; for processing activity in the catalytic mechanism. The Proton donor; for catalytic activity role is filled by cysteine 140.

It belongs to the prokaryotic AdoMetDC family. Type 2 subfamily. As to quaternary structure, heterooctamer of four alpha and four beta chains arranged as a tetramer of alpha/beta heterodimers. Pyruvate serves as cofactor. Is synthesized initially as an inactive proenzyme. Formation of the active enzyme involves a self-maturation process in which the active site pyruvoyl group is generated from an internal serine residue via an autocatalytic post-translational modification. Two non-identical subunits are generated from the proenzyme in this reaction, and the pyruvate is formed at the N-terminus of the alpha chain, which is derived from the carboxyl end of the proenzyme. The post-translation cleavage follows an unusual pathway, termed non-hydrolytic serinolysis, in which the side chain hydroxyl group of the serine supplies its oxygen atom to form the C-terminus of the beta chain, while the remainder of the serine residue undergoes an oxidative deamination to produce ammonia and the pyruvoyl group blocking the N-terminus of the alpha chain.

The enzyme catalyses S-adenosyl-L-methionine + H(+) = S-adenosyl 3-(methylsulfanyl)propylamine + CO2. Its pathway is amine and polyamine biosynthesis; S-adenosylmethioninamine biosynthesis; S-adenosylmethioninamine from S-adenosyl-L-methionine: step 1/1. Catalyzes the decarboxylation of S-adenosylmethionine to S-adenosylmethioninamine (dcAdoMet), the propylamine donor required for the synthesis of the polyamines spermine and spermidine from the diamine putrescine. This chain is S-adenosylmethionine decarboxylase proenzyme, found in Photorhabdus laumondii subsp. laumondii (strain DSM 15139 / CIP 105565 / TT01) (Photorhabdus luminescens subsp. laumondii).